A 609-amino-acid polypeptide reads, in one-letter code: Snake venom metalloproteinase-disintegrin-like mocarhagin (609 aa).

An N-terminal signal peptide occupies residues 1 to 20; the sequence is MIQALLVAICLAVFPYQGSS. A propeptide spanning residues 21 to 191 is cleaved from the precursor; that stretch reads IILESGNVND…DEPIEKSSQL (171 aa). Residues 205 to 400 form the Peptidase M12B domain; it reads KYIEFYVVVD…DRPQCILNKP (196 aa). Residues glutamate 208 and aspartate 292 each coordinate Ca(2+). A glycan (N-linked (GlcNAc...) asparagine) is linked at asparagine 303. 3 disulfide bridges follow: cysteine 316–cysteine 395, cysteine 356–cysteine 379, and cysteine 358–cysteine 363. The Zn(2+) site is built by histidine 341 and histidine 345. The Ca(2+) site is built by cysteine 395, asparagine 398, valine 410, asparagine 413, phenylalanine 415, glutamate 417, glutamate 420, and aspartate 423. The Disintegrin domain occupies 408-494; that stretch reads PPVCGNYFVE…KCPKDSFQRN (87 aa). 14 disulfides stabilise this stretch: cysteine 411–cysteine 440, cysteine 422–cysteine 435, cysteine 424–cysteine 430, cysteine 434–cysteine 457, cysteine 448–cysteine 454, cysteine 453–cysteine 479, cysteine 466–cysteine 486, cysteine 473–cysteine 505, cysteine 498–cysteine 510, cysteine 517–cysteine 567, cysteine 532–cysteine 575, cysteine 545–cysteine 555, cysteine 562–cysteine 601, and cysteine 595–cysteine 606. A D/ECD-tripeptide motif is present at residues 472-474; it reads DCD. N-linked (GlcNAc...) asparagine glycosylation is present at asparagine 507.

This sequence belongs to the venom metalloproteinase (M12B) family. P-III subfamily. P-IIIa sub-subfamily. As to quaternary structure, monomer. It depends on Zn(2+) as a cofactor. As to expression, expressed by the venom gland.

It is found in the secreted. Inhibited by EDTA and diisopropyl fluorophosphate (DFP). Also inhibited by an excess of zinc or calcium ions. Its function is as follows. Snake venom zinc metalloproteinase that inhibits platelet aggregation by cleaving platelet glycoprotein Ib alpha (GP1BA) at Glu-298/Asp-299, and abolishes binding of von Willebrand factor (VWF) to GPIBA. Cleaves P-selectin glycoprotein ligand-1 (PSGL-1/SELPLG) at Tyr-51/Asp-52, and completely abolishes the binding of PSGL-1 to P-selectin. Anionic amino acid sequences containing sulfated tyrosines are needed for cleavages. Inhibits the thrombin-induced platelet aggregation, and the thrombin-induced release of ATP and ADP. Has lectin activity (inhibited by heparin). This chain is Snake venom metalloproteinase-disintegrin-like mocarhagin, found in Naja mossambica (Mozambique spitting cobra).